The primary structure comprises 524 residues: uncharacterized protein (524 aa).

A helical membrane pass occupies residues 13–33 (EFILLILGMTVVGIVITMGLV).

Its subcellular location is the membrane. This is an uncharacterized protein from Methanocaldococcus jannaschii (strain ATCC 43067 / DSM 2661 / JAL-1 / JCM 10045 / NBRC 100440) (Methanococcus jannaschii).